Consider the following 515-residue polypeptide: Tabersonine 6,7-epoxidase isoform 2 (515 aa).

Residues 1–21 (MEFVVSPFAFLIFFFILLKMI) form a helical membrane-spanning segment. Residues Asn-173, Asn-259, and Asn-352 are each glycosylated (N-linked (GlcNAc...) asparagine). A heme-binding site is contributed by Cys-449.

This sequence belongs to the cytochrome P450 family. It depends on heme as a cofactor. In terms of tissue distribution, mainly expressed in aerial organs, including stems, leaves and flowers.

The protein resides in the endoplasmic reticulum membrane. It carries out the reaction (-)-tabersonine + reduced [NADPH--hemoprotein reductase] + O2 = lochnericine + oxidized [NADPH--hemoprotein reductase] + H2O + H(+). It participates in alkaloid biosynthesis. Its function is as follows. Component of the monoterpenoid indole alkaloids (MIAs, e.g. echitovenine, tabersonine, lochnericine, 19-hydroxytabersonine and horhammericine) biosynthetic pathway; MIAs are used in cancer treatment and other medical applications. Cytochrome P450 catalyzing the conversion of tabersonine to lochnericine. The sequence is that of Tabersonine 6,7-epoxidase isoform 2 from Catharanthus roseus (Madagascar periwinkle).